Here is a 100-residue protein sequence, read N- to C-terminus: Small ribosomal subunit protein uS14c (100 aa).

This sequence belongs to the universal ribosomal protein uS14 family. In terms of assembly, part of the 30S ribosomal subunit.

It localises to the plastid. The protein localises to the chloroplast. In terms of biological role, binds 16S rRNA, required for the assembly of 30S particles. This Calycanthus floridus var. glaucus (Eastern sweetshrub) protein is Small ribosomal subunit protein uS14c.